We begin with the raw amino-acid sequence, 405 residues long: Alpha-1-antiproteinase S (405 aa).

The N-terminal stretch at 1 to 24 is a signal peptide; sequence MPSAIPRGLLLLAGLCCLVFGIMA. Residues asparagine 57, asparagine 94, asparagine 157, and asparagine 258 are each glycosylated (N-linked (GlcNAc...) asparagine). Residues 360-379 form an RCL region; sequence GATMMEFMPMSLPEDLSFNK.

The protein belongs to the serpin family.

The protein localises to the secreted. Inhibits elastase, chymotrypsin, cathepsin G, plasmin, and trypsin. The chain is Alpha-1-antiproteinase S from Cavia porcellus (Guinea pig).